The chain runs to 777 residues: Acyl-CoA dehydrogenase family member 11 (777 aa).

FAD is bound by residues 501-511 (FCMTEPDVASS), 509-511 (ASS), 535-537 (WSS), and S537. S511 lines the substrate pocket. Residue 626–629 (GPGR) participates in substrate binding. Residues R654, Q724, and 724 to 728 (QVCGG) contribute to the FAD site. G752 serves as a coordination point for substrate. FAD is bound by residues 753-755 (PDE) and E755.

The protein belongs to the acyl-CoA dehydrogenase family. Homodimer. The cofactor is FAD.

It localises to the peroxisome. The protein resides in the mitochondrion membrane. The enzyme catalyses a 2,3-saturated acyl-CoA + oxidized [electron-transfer flavoprotein] + H(+) = a (2E)-enoyl-CoA + reduced [electron-transfer flavoprotein]. It catalyses the reaction docosanoyl-CoA + oxidized [electron-transfer flavoprotein] + H(+) = (2E)-docosenoyl-CoA + reduced [electron-transfer flavoprotein]. It carries out the reaction tetracosanoyl-CoA + oxidized [electron-transfer flavoprotein] + H(+) = (2E)-tetracosenoyl-CoA + reduced [electron-transfer flavoprotein]. The catalysed reaction is eicosanoyl-CoA + oxidized [electron-transfer flavoprotein] + H(+) = (2E)-eicosenoyl-CoA + reduced [electron-transfer flavoprotein]. The enzyme catalyses hexacosanoyl-CoA + oxidized [electron-transfer flavoprotein] + H(+) = (2E)-hexacosenoyl-CoA + reduced [electron-transfer flavoprotein]. It catalyses the reaction tricosanoyl-CoA + oxidized [electron-transfer flavoprotein] + H(+) = (2E)-tricosenoyl-CoA + reduced [electron-transfer flavoprotein]. Its pathway is lipid metabolism; fatty acid beta-oxidation. In terms of biological role, acyl-CoA dehydrogenase, that exhibits maximal activity towards saturated C22-CoA. Probably participates in beta-oxydation and energy production but could also play a role in the metabolism of specific fatty acids to control fatty acids composition of cellular lipids in brain. The chain is Acyl-CoA dehydrogenase family member 11 (ACAD11) from Gallus gallus (Chicken).